Here is a 130-residue protein sequence, read N- to C-terminus: Large ribosomal subunit protein bL17 (130 aa).

This sequence belongs to the bacterial ribosomal protein bL17 family. As to quaternary structure, part of the 50S ribosomal subunit. Contacts protein L32.

The sequence is that of Large ribosomal subunit protein bL17 from Buchnera aphidicola subsp. Acyrthosiphon pisum (strain APS) (Acyrthosiphon pisum symbiotic bacterium).